The primary structure comprises 251 residues: Histocompatibility antigen 60b (251 aa).

The first 24 residues, 1 to 24 (MAKSSLSLNWSLLVLLNFLGATLS), serve as a signal peptide directing secretion. Residues 25 to 212 (TGTDSLSCEL…NSDTQGLSFT (188 aa)) lie on the Extracellular side of the membrane. 4 N-linked (GlcNAc...) asparagine glycosylation sites follow: Asn-63, Asn-93, Asn-126, and Asn-189. A helical membrane pass occupies residues 213–233 (WIVIICIGGIVSFMAFMVFAW). At 234-251 (CMLKKKKGALCCSSSSTT) the chain is on the cytoplasmic side.

Belongs to the NKG2D ligand family. As to expression, in strain C57BL/6J, strongly expressed in cardiac muscle and skeletal muscle, with lower expression levels in spleen, liver, kidney and thymus. In strain BALB/cJ, weakly expressed in cardiac muscle, spleen, kidney and thymus.

It is found in the cell membrane. Its function is as follows. Ligand for the KLRK1 immunosurveillance receptor. Binding to KLRK1 stimulates cell lysis in vitro. This is Histocompatibility antigen 60b from Mus musculus (Mouse).